The chain runs to 400 residues: Na(+)/H(+) antiporter NhaA (400 aa).

The next 11 membrane-spanning stretches (helical) occupy residues 10-30, 60-80, 95-115, 126-146, 155-175, 178-198, 218-238, 265-285, 295-315, 334-354, and 364-384; these read FNLE…AMII, AHHW…GLEL, IILP…VYLF, GWAI…SLLG, VFLV…IALF, NDLS…LYLL, VAVL…ALFI, GILP…AGFG, IAAG…WLIF, AALL…LAFA, and LGII…LKAT.

This sequence belongs to the NhaA Na(+)/H(+) (TC 2.A.33) antiporter family.

The protein localises to the cell inner membrane. It carries out the reaction Na(+)(in) + 2 H(+)(out) = Na(+)(out) + 2 H(+)(in). In terms of biological role, na(+)/H(+) antiporter that extrudes sodium in exchange for external protons. The polypeptide is Na(+)/H(+) antiporter NhaA (Psychrobacter cryohalolentis (strain ATCC BAA-1226 / DSM 17306 / VKM B-2378 / K5)).